A 104-amino-acid chain; its full sequence is uncharacterized protein (104 aa).

This is an uncharacterized protein from Mycoplasma genitalium (strain ATCC 33530 / DSM 19775 / NCTC 10195 / G37) (Mycoplasmoides genitalium).